A 105-amino-acid polypeptide reads, in one-letter code: DNA-binding transcriptional regulator BolA (105 aa).

The protein belongs to the BolA/IbaG family.

In terms of biological role, transcriptional regulator that plays an important role in general stress response. Has many effects on cell morphology, cell growth and cell division. Acts by regulating the transcription of many genes, including dacA (PBP-5), dacC (PBP-6), ampC and mreB. Probably involved in the coordination of genes that adapt the cell physiology in order to enhance cell adaptation and survival under stress conditions. Essential for normal cell morphology in stationary phase and under conditions of starvation. Also regulates a complex network of genes encoding proteins related to biofilm development, and negatively modulates flagellar biosynthesis and swimming capacity. Could be a motile/adhesive transcriptional switch, specifically involved in the transition between the planktonic and the attachment stage of biofilm formation. Overexpression produces round cell shape, impairs cell growth rate and induces biofilm development. The protein is DNA-binding transcriptional regulator BolA of Escherichia coli (strain K12).